We begin with the raw amino-acid sequence, 194 residues long: Histone H1.0-A (194 aa).

Disordered stretches follow at residues 1 to 29 and 96 to 194; these read MTENSAPAAKPRRSKASKKSTDHPKYSDM and ADEV…GRKK. The 74-residue stretch at 22–95 folds into the H15 domain; sequence DHPKYSDMIL…GASGSFRLAK (74 aa). 2 stretches are compositionally biased toward basic residues: residues 102–164 and 172–194; these read PAKK…KTVR and KAKKAKPSKPKAKASPKKSGRKK.

The protein belongs to the histone H1/H5 family.

The protein localises to the nucleus. The protein resides in the chromosome. Its function is as follows. Histones H1 are necessary for the condensation of nucleosome chains into higher-order structures. The histones H1.0 are found in cells that are in terminal stages of differentiation or that have low rates of cell division. This is Histone H1.0-A (h1-0-a) from Xenopus laevis (African clawed frog).